A 246-amino-acid polypeptide reads, in one-letter code: Acetoacetate decarboxylase (246 aa).

K116 serves as the catalytic Schiff-base intermediate with acetoacetate.

It belongs to the ADC family.

The enzyme catalyses acetoacetate + H(+) = acetone + CO2. In terms of biological role, catalyzes the conversion of acetoacetate to acetone and carbon dioxide. This is Acetoacetate decarboxylase from Burkholderia multivorans (strain ATCC 17616 / 249).